A 411-amino-acid chain; its full sequence is 2,3-bisphosphoglycerate-independent phosphoglycerate mutase (411 aa).

The protein belongs to the BPG-independent phosphoglycerate mutase family. A-PGAM subfamily. In terms of assembly, homotetramer. The cofactor is Mg(2+).

It catalyses the reaction (2R)-2-phosphoglycerate = (2R)-3-phosphoglycerate. Its pathway is carbohydrate degradation; glycolysis; pyruvate from D-glyceraldehyde 3-phosphate: step 3/5. Inhibited to approximately 20% by EDTA. In terms of biological role, catalyzes the interconversion of 2-phosphoglycerate and 3-phosphoglycerate. This Pyrococcus furiosus (strain ATCC 43587 / DSM 3638 / JCM 8422 / Vc1) protein is 2,3-bisphosphoglycerate-independent phosphoglycerate mutase (apgM).